The chain runs to 327 residues: MDLYPEENTQSEQSQNSENNMQIFKSENSDGFSSDLMISNDQLKNISKTQLTLEKEKIFKMPNVLSQVMKKAFSRKNEILYCVSTKELSVDIHDATGKVYLPLITKEEINKRLSSLKPEVRKTMSMVHLGAVKILLKAQFRNGIDTPIKIALIDDRINSRRDCLLGAAKGNLAYGKFMFTVYPKFGISLNTQRLNQTLSLIHDFENKNLMNKGDKVMTITYVVGYALTNSHHSIDYQSNATIELEDVFQEIGNVQQSEFCTIQNDECNWAIDIAQNKALLGAKTKTQIGNNLQIGNSASSSNTENELARVSQNIDLLKNKLKEICGE.

A coiled-coil region spans residues 297-327 (SASSSNTENELARVSQNIDLLKNKLKEICGE).

This sequence belongs to the caulimoviridae movement protein family. As to quaternary structure, homotrimer, through the coiled-coil domain. Interacts with VAP. May interact (via N-terminus) with host prenylated Rab acceptor protein 1D (PRA1D).

Its subcellular location is the host cell junction. The protein resides in the host plasmodesma. Transports viral genome to neighboring plant cells directly through plasmosdesmata, without any budding. The movement protein allows efficient cell to cell propagation, by bypassing the host cell wall barrier. Acts by forming tubules structures that increase the size exclusion limit (SEL) of plasmodesmata, thereby allowing viral ribonucleocapsids to spread directly to neighboring cells. This is Movement protein from Cauliflower mosaic virus (strain Strasbourg) (CaMV).